The sequence spans 620 residues: 1-deoxy-D-xylulose-5-phosphate synthase (620 aa).

Residues His-80 and Gly-121 to Ser-123 contribute to the thiamine diphosphate site. Asp-152 provides a ligand contact to Mg(2+). Residues Gly-153–Ala-154, Asn-181, Tyr-288, and Glu-370 contribute to the thiamine diphosphate site. Asn-181 is a binding site for Mg(2+).

The protein belongs to the transketolase family. DXPS subfamily. In terms of assembly, homodimer. Mg(2+) serves as cofactor. Requires thiamine diphosphate as cofactor.

The catalysed reaction is D-glyceraldehyde 3-phosphate + pyruvate + H(+) = 1-deoxy-D-xylulose 5-phosphate + CO2. It participates in metabolic intermediate biosynthesis; 1-deoxy-D-xylulose 5-phosphate biosynthesis; 1-deoxy-D-xylulose 5-phosphate from D-glyceraldehyde 3-phosphate and pyruvate: step 1/1. Functionally, catalyzes the acyloin condensation reaction between C atoms 2 and 3 of pyruvate and glyceraldehyde 3-phosphate to yield 1-deoxy-D-xylulose-5-phosphate (DXP). The polypeptide is 1-deoxy-D-xylulose-5-phosphate synthase (Escherichia coli (strain 55989 / EAEC)).